The sequence spans 382 residues: Anhydro-N-acetylmuramic acid kinase (382 aa).

9–16 (GTSLDGID) serves as a coordination point for ATP.

This sequence belongs to the anhydro-N-acetylmuramic acid kinase family.

It catalyses the reaction 1,6-anhydro-N-acetyl-beta-muramate + ATP + H2O = N-acetyl-D-muramate 6-phosphate + ADP + H(+). The protein operates within amino-sugar metabolism; 1,6-anhydro-N-acetylmuramate degradation. It functions in the pathway cell wall biogenesis; peptidoglycan recycling. In terms of biological role, catalyzes the specific phosphorylation of 1,6-anhydro-N-acetylmuramic acid (anhMurNAc) with the simultaneous cleavage of the 1,6-anhydro ring, generating MurNAc-6-P. Is required for the utilization of anhMurNAc either imported from the medium or derived from its own cell wall murein, and thus plays a role in cell wall recycling. The polypeptide is Anhydro-N-acetylmuramic acid kinase (Bacillus cereus (strain 03BB102)).